The sequence spans 610 residues: POU domain, class 6, transcription factor 1 (610 aa).

The interval 55–87 (SSAGAAESGGDEEGSGQSLEATEEAQLDGPVTT) is disordered. The region spanning 448–522 (EEAINLEEIR…VLERWLAEAE (75 aa)) is the POU-specific domain. Positions 543–602 (KRKRRTSFTPQAIEVLNTYFEKNSLPTGQEITEIAKELNYDREVVRVWFCNRRQTLKNTS) form a DNA-binding region, homeobox.

This sequence belongs to the POU transcription factor family. Class-6 subfamily. As to expression, ubiquitously expressed during embryogenesis.

The protein resides in the nucleus. Its function is as follows. Transcription factor that binds with high affinity to the motif 5'-TAATGARAT-3'. The sequence is that of POU domain, class 6, transcription factor 1 (pou6f1) from Danio rerio (Zebrafish).